Here is a 246-residue protein sequence, read N- to C-terminus: 3-deoxy-manno-octulosonate cytidylyltransferase (246 aa).

It belongs to the KdsB family.

Its subcellular location is the cytoplasm. The catalysed reaction is 3-deoxy-alpha-D-manno-oct-2-ulosonate + CTP = CMP-3-deoxy-beta-D-manno-octulosonate + diphosphate. It participates in nucleotide-sugar biosynthesis; CMP-3-deoxy-D-manno-octulosonate biosynthesis; CMP-3-deoxy-D-manno-octulosonate from 3-deoxy-D-manno-octulosonate and CTP: step 1/1. The protein operates within bacterial outer membrane biogenesis; lipopolysaccharide biosynthesis. In terms of biological role, activates KDO (a required 8-carbon sugar) for incorporation into bacterial lipopolysaccharide in Gram-negative bacteria. This chain is 3-deoxy-manno-octulosonate cytidylyltransferase, found in Chloroherpeton thalassium (strain ATCC 35110 / GB-78).